A 980-amino-acid chain; its full sequence is LRR receptor-like serine/threonine-protein kinase SIK1 (980 aa).

The signal sequence occupies residues M1–A24. Over A25–T588 the chain is Extracellular. Residues N72 and N81 are each glycosylated (N-linked (GlcNAc...) asparagine). LRR repeat units lie at residues F75–L98, K99–C122, S124–L146, K147–I170, P171–N194, V196–L218, T219–C242, T243–F265, L266–M289, Q290–N312, S314–M337, S338–L361, E362–C385, A387–K408, L409–I433, N435–L457, E458–N480, L481–L505, N507–C529, and S531–K554. N-linked (GlcNAc...) asparagine glycosylation is found at N230 and N241. N-linked (GlcNAc...) asparagine glycosylation is found at N312 and N336. Residues N381, N399, and N416 are each glycosylated (N-linked (GlcNAc...) asparagine). N464 and N493 each carry an N-linked (GlcNAc...) asparagine glycan. N-linked (GlcNAc...) asparagine glycans are attached at residues N536, N541, N551, and N584. A helical transmembrane segment spans residues A589–Y609. Topologically, residues K610–M980 are cytoplasmic. Positions L653–L923 constitute a Protein kinase domain. ATP-binding positions include I659–V667 and K681. The active-site Proton acceptor is D778.

This sequence belongs to the protein kinase superfamily. Ser/Thr protein kinase family. In terms of processing, autophosphorylated. Expressed in nodes, vascular bundles of stems, and anthers.

It is found in the cell membrane. It catalyses the reaction L-seryl-[protein] + ATP = O-phospho-L-seryl-[protein] + ADP + H(+). The enzyme catalyses L-threonyl-[protein] + ATP = O-phospho-L-threonyl-[protein] + ADP + H(+). Its function is as follows. Receptor kinase involved in salt drought stress responses. Acts as a positive regulator of salt and drought tolerance. May promote salt and drought tolerance through the induction of the activities of antioxidative enzymes, such as peroxidase, superoxide dismutase and catalase. May be involved in the control of stomatal development in leaf epidermis. Possesses kinase activity in vitro. Does not seem to be involved in heat tolerance. The chain is LRR receptor-like serine/threonine-protein kinase SIK1 from Oryza sativa subsp. japonica (Rice).